A 227-amino-acid chain; its full sequence is Ubiquitin domain-containing protein 1 (227 aa).

Residues 1-36 (MGNCVGRQRRERPTAPGHPRKRAGRNEPLKKERLKW) form a disordered region. Residues 24–36 (GRNEPLKKERLKW) are compositionally biased toward basic and acidic residues. The region spanning 149 to 224 (FPLKVRLSTG…IQVIINQPPP (76 aa)) is the Ubiquitin-like domain.

As to quaternary structure, interacts with UBTD1.

In terms of biological role, may be involved in the regulation of cellular senescence through a positive feedback loop with TP53. Is a TP53 downstream target gene that increases the stability of TP53 protein by promoting the ubiquitination and degradation of MDM2. This is Ubiquitin domain-containing protein 1 (UBTD1) from Bos taurus (Bovine).